We begin with the raw amino-acid sequence, 357 residues long: 4-hydroxy-3-methylbut-2-en-1-yl diphosphate synthase (flavodoxin) (357 aa).

Residues C265, C268, C300, and E307 each coordinate [4Fe-4S] cluster.

Belongs to the IspG family. In terms of assembly, homodimer. [4Fe-4S] cluster is required as a cofactor.

It catalyses the reaction (2E)-4-hydroxy-3-methylbut-2-enyl diphosphate + oxidized [flavodoxin] + H2O + 2 H(+) = 2-C-methyl-D-erythritol 2,4-cyclic diphosphate + reduced [flavodoxin]. It participates in isoprenoid biosynthesis; isopentenyl diphosphate biosynthesis via DXP pathway; isopentenyl diphosphate from 1-deoxy-D-xylulose 5-phosphate: step 5/6. Converts 2C-methyl-D-erythritol 2,4-cyclodiphosphate (ME-2,4cPP) into 1-hydroxy-2-methyl-2-(E)-butenyl 4-diphosphate. This Aquifex aeolicus (strain VF5) protein is 4-hydroxy-3-methylbut-2-en-1-yl diphosphate synthase (flavodoxin).